Reading from the N-terminus, the 137-residue chain is Cucumber peeling cupredoxin (137 aa).

Gln1 bears the Pyrrolidone carboxylic acid mark. The region spanning 3–107 is the Phytocyanin domain; that stretch reads TVHIVGDNTG…GQKLSINVVA (105 aa). Cu cation-binding residues include His46, Cys89, His94, and Gln99. Residues Cys60 and Cys95 are joined by a disulfide bond. A glycan (N-linked (GlcNAc...) asparagine) is linked at Asn109. The segment at 112–137 is disordered; the sequence is VSMPPPSSSPPSSVMPPPVMPPPSPS. Residues 114-137 show a composition bias toward pro residues; it reads MPPPSSSPPSSVMPPPVMPPPSPS. Residue Pro115 is modified to 4-hydroxyproline; partial. 4-hydroxyproline occurs at positions 116, 117, 121, and 122. A 4-hydroxyproline; partial modification is found at Pro127. 4-hydroxyproline occurs at positions 128, 129, 133, 134, and 136.

In Cucumis sativus (Cucumber), this protein is Cucumber peeling cupredoxin.